Consider the following 667-residue polypeptide: DNA ligase (667 aa).

Residues 32–36 and 80–81 each bind NAD(+); these read DKDYD and SL. Lys-121 (N6-AMP-lysine intermediate) is an active-site residue. Positions 143, 178, and 314 each coordinate NAD(+). Zn(2+) contacts are provided by Cys-407, Cys-410, Cys-423, and Cys-429. Positions 587-667 constitute a BRCT domain; the sequence is IVESIFKDKT…EFEKMLGRES (81 aa).

Belongs to the NAD-dependent DNA ligase family. LigA subfamily. Mg(2+) serves as cofactor. Mn(2+) is required as a cofactor.

The catalysed reaction is NAD(+) + (deoxyribonucleotide)n-3'-hydroxyl + 5'-phospho-(deoxyribonucleotide)m = (deoxyribonucleotide)n+m + AMP + beta-nicotinamide D-nucleotide.. Its function is as follows. DNA ligase that catalyzes the formation of phosphodiester linkages between 5'-phosphoryl and 3'-hydroxyl groups in double-stranded DNA using NAD as a coenzyme and as the energy source for the reaction. It is essential for DNA replication and repair of damaged DNA. The protein is DNA ligase of Clostridium botulinum (strain Eklund 17B / Type B).